The following is a 304-amino-acid chain: Glutaminase (304 aa).

Ser63, Asn114, Glu158, Asn165, Tyr189, Tyr240, and Val258 together coordinate substrate.

The protein belongs to the glutaminase family. As to quaternary structure, homotetramer.

The enzyme catalyses L-glutamine + H2O = L-glutamate + NH4(+). This Shewanella oneidensis (strain ATCC 700550 / JCM 31522 / CIP 106686 / LMG 19005 / NCIMB 14063 / MR-1) protein is Glutaminase.